Consider the following 478-residue polypeptide: Aspartate ammonia-lyase (478 aa).

L-aspartate contacts are provided by threonine 109, serine 148, threonine 149, asparagine 150, and threonine 195. The SS loop stretch occupies residues 326–335; that stretch reads GSSIMPGKVN. The active-site Proton acceptor is the serine 327. Positions 328 and 333 each coordinate L-aspartate.

Belongs to the class-II fumarase/aspartase family. Aspartase subfamily. As to quaternary structure, homotetramer.

It catalyses the reaction L-aspartate = fumarate + NH4(+). Catalyzes the reversible conversion of L-aspartate to fumarate and ammonia. The chain is Aspartate ammonia-lyase from Pseudomonas fluorescens.